The following is a 633-amino-acid chain: Kelch-like protein diablo (633 aa).

Residues 1-62 form a disordered region; that stretch reads MGDLPGSTGG…ARLSHTSEKH (62 aa). A compositionally biased stretch (gly residues) spans 7-25; it reads STGGGGGVGGGGNGGGGPT. Low complexity predominate over residues 26–45; that stretch reads IAGTNGNSTTGPGSSTGSTG. Positions 80–147 constitute a BTB domain; it reads CDVVLNVGGR…CYTAHIIVEE (68 aa). Residues 182–284 form the BACK domain; sequence CLGIRAFADT…SPKFLVGTVG (103 aa). 6 Kelch repeats span residues 331–377, 379–425, 426–472, 474–519, 521–566, and 567–613; these read VLFA…VLND, LYAV…VLDG, FLYA…VLGG, LYAI…VFNN, IYAV…VVNG, and QLYA…VMRA.

Its pathway is protein modification; protein ubiquitination. Probable substrate-specific adapter of an E3 ubiquitin-protein ligase complex which mediates the ubiquitination and subsequent proteasomal degradation of target proteins. May have a role in synapse differentiation and growth. This is Kelch-like protein diablo from Drosophila ananassae (Fruit fly).